The chain runs to 187 residues: dCTP deaminase, dUMP-forming (187 aa).

Residues 99 to 104 (KSSIAR), Asp-117, 125 to 127 (TLE), Gln-146, Tyr-159, Lys-166, and Gln-170 contribute to the dCTP site. The active-site Proton donor/acceptor is Glu-127.

This sequence belongs to the dCTP deaminase family. Homotrimer.

It carries out the reaction dCTP + 2 H2O = dUMP + NH4(+) + diphosphate. The protein operates within pyrimidine metabolism; dUMP biosynthesis; dUMP from dCTP: step 1/1. Bifunctional enzyme that catalyzes both the deamination of dCTP to dUTP and the hydrolysis of dUTP to dUMP without releasing the toxic dUTP intermediate. The chain is dCTP deaminase, dUMP-forming from Methanoculleus marisnigri (strain ATCC 35101 / DSM 1498 / JR1).